Reading from the N-terminus, the 666-residue chain is Putative L-type lectin-domain containing receptor kinase V.1 (666 aa).

Positions 1–18 (MVLLLFLVLFFVPESVVC) are cleaved as a signal peptide. Residues 19–289 (QRPNPNGVEF…WIQSPNGILT (271 aa)) are Extracellular-facing. A legume-lectin like region spans residues 27–257 (EFNTSGNMYT…SHYILGWTFK (231 aa)). N-linked (GlcNAc...) asparagine glycans are attached at residues N29, N74, N123, N176, N204, and N259. Residues 290–310 (ISLTVSGVIILIILSLSLWLF) traverse the membrane as a helical segment. Residues 311–666 (LKRKKLLEVL…FTESFVSHGR (356 aa)) lie on the Cytoplasmic side of the membrane. Residues 344-625 (FKDTEVLGKG…SVAQLPHNLL (282 aa)) form the Protein kinase domain. ATP is bound by residues 350 to 358 (LGKGGFGKV) and K373. The active-site Proton acceptor is the D469.

This sequence in the C-terminal section; belongs to the protein kinase superfamily. Ser/Thr protein kinase family. In the N-terminal section; belongs to the leguminous lectin family.

It localises to the cell membrane. The enzyme catalyses L-seryl-[protein] + ATP = O-phospho-L-seryl-[protein] + ADP + H(+). It carries out the reaction L-threonyl-[protein] + ATP = O-phospho-L-threonyl-[protein] + ADP + H(+). This is Putative L-type lectin-domain containing receptor kinase V.1 (LECRK51) from Arabidopsis thaliana (Mouse-ear cress).